We begin with the raw amino-acid sequence, 253 residues long: Ribosome-inactivating protein saporin-7 (253 aa).

Residue Glu-176 is part of the active site.

This sequence belongs to the ribosome-inactivating protein family. Type 1 RIP subfamily.

It catalyses the reaction Endohydrolysis of the N-glycosidic bond at one specific adenosine on the 28S rRNA.. Functionally, ribosome-inactivating protein of type 1, inhibits protein synthesis in animal cells. This is Ribosome-inactivating protein saporin-7 (SAP7) from Saponaria officinalis (Common soapwort).